The primary structure comprises 196 residues: UMP-CMP kinase (196 aa).

13–18 (GAGKGT) provides a ligand contact to ATP. Serine 33 is subject to Phosphoserine. The tract at residues 33-63 (SAGELLRDERKNPDSQYGELIEKYIKEGKIV) is NMP. Position 39 (arginine 39) interacts with a ribonucleoside 5'-phosphate. N6-acetyllysine occurs at positions 43 and 55. 61-63 (KIV) serves as a coordination point for a ribonucleoside 5'-phosphate. A Glycyl lysine isopeptide (Lys-Gly) (interchain with G-Cter in SUMO2) cross-link involves residue lysine 73. 93-96 (GFPR) is a binding site for a ribonucleoside 5'-phosphate. Asparagine 100 provides a ligand contact to CMP. Position 106 is an N6-succinyllysine (lysine 106). Residues 133–143 (ERGKSSGRSDD) are LID. Arginine 134 is a binding site for ATP. Residues arginine 140 and arginine 151 each contribute to the a ribonucleoside 5'-phosphate site. ATP is bound at residue lysine 179. Serine 180 bears the Phosphoserine mark.

It belongs to the adenylate kinase family. UMP-CMP kinase subfamily. As to quaternary structure, monomer. Requires Mg(2+) as cofactor.

It is found in the nucleus. It localises to the cytoplasm. It catalyses the reaction CMP + ATP = CDP + ADP. The catalysed reaction is dCMP + ATP = dCDP + ADP. The enzyme catalyses UMP + ATP = UDP + ADP. It carries out the reaction a 2'-deoxyribonucleoside 5'-diphosphate + ATP = a 2'-deoxyribonucleoside 5'-triphosphate + ADP. It catalyses the reaction a ribonucleoside 5'-diphosphate + ATP = a ribonucleoside 5'-triphosphate + ADP. Functionally, catalyzes the phosphorylation of pyrimidine nucleoside monophosphates at the expense of ATP. Plays an important role in de novo pyrimidine nucleotide biosynthesis. Has preference for UMP and CMP as phosphate acceptors. Also displays broad nucleoside diphosphate kinase activity. The polypeptide is UMP-CMP kinase (Cmpk1) (Rattus norvegicus (Rat)).